A 737-amino-acid chain; its full sequence is Phosphoribosylformylglycinamidine synthase subunit PurL (737 aa).

The active site involves histidine 50. Tyrosine 53 and lysine 92 together coordinate ATP. Glutamate 94 contributes to the Mg(2+) binding site. Substrate is bound by residues serine 95–histidine 98 and arginine 117. Histidine 96 functions as the Proton acceptor in the catalytic mechanism. Aspartate 118 contacts Mg(2+). Glutamine 241 is a binding site for substrate. Aspartate 269 provides a ligand contact to Mg(2+). Glutamate 313–glutamine 315 serves as a coordination point for substrate. Residues aspartate 495 and glycine 532 each coordinate ATP. Asparagine 533 lines the Mg(2+) pocket. Serine 535 serves as a coordination point for substrate.

It belongs to the FGAMS family. Monomer. Part of the FGAM synthase complex composed of 1 PurL, 1 PurQ and 2 PurS subunits.

It is found in the cytoplasm. The catalysed reaction is N(2)-formyl-N(1)-(5-phospho-beta-D-ribosyl)glycinamide + L-glutamine + ATP + H2O = 2-formamido-N(1)-(5-O-phospho-beta-D-ribosyl)acetamidine + L-glutamate + ADP + phosphate + H(+). It participates in purine metabolism; IMP biosynthesis via de novo pathway; 5-amino-1-(5-phospho-D-ribosyl)imidazole from N(2)-formyl-N(1)-(5-phospho-D-ribosyl)glycinamide: step 1/2. Functionally, part of the phosphoribosylformylglycinamidine synthase complex involved in the purines biosynthetic pathway. Catalyzes the ATP-dependent conversion of formylglycinamide ribonucleotide (FGAR) and glutamine to yield formylglycinamidine ribonucleotide (FGAM) and glutamate. The FGAM synthase complex is composed of three subunits. PurQ produces an ammonia molecule by converting glutamine to glutamate. PurL transfers the ammonia molecule to FGAR to form FGAM in an ATP-dependent manner. PurS interacts with PurQ and PurL and is thought to assist in the transfer of the ammonia molecule from PurQ to PurL. This Bartonella bacilliformis (strain ATCC 35685 / KC583 / Herrer 020/F12,63) protein is Phosphoribosylformylglycinamidine synthase subunit PurL.